Reading from the N-terminus, the 514-residue chain is ATP synthase subunit alpha (514 aa).

170–177 (GDRQTGKT) provides a ligand contact to ATP.

Belongs to the ATPase alpha/beta chains family. In terms of assembly, F-type ATPases have 2 components, CF(1) - the catalytic core - and CF(0) - the membrane proton channel. CF(1) has five subunits: alpha(3), beta(3), gamma(1), delta(1), epsilon(1). CF(0) has three main subunits: a(1), b(2) and c(9-12). The alpha and beta chains form an alternating ring which encloses part of the gamma chain. CF(1) is attached to CF(0) by a central stalk formed by the gamma and epsilon chains, while a peripheral stalk is formed by the delta and b chains.

The protein resides in the cell inner membrane. The enzyme catalyses ATP + H2O + 4 H(+)(in) = ADP + phosphate + 5 H(+)(out). Its function is as follows. Produces ATP from ADP in the presence of a proton gradient across the membrane. The alpha chain is a regulatory subunit. This chain is ATP synthase subunit alpha, found in Acidithiobacillus ferridurans.